Consider the following 248-residue polypeptide: Anamorsin homolog (248 aa).

Positions 4–129 (FKGLQKSLYI…ETGSSARLSF (126 aa)) are N-terminal SAM-like domain. Positions 130-161 (AKKNANAVNVWKISGDDEELIDEEELLDEEDK) are linker. The [2Fe-2S] cluster site is built by C172, C181, C184, and C186. The tract at residues 172–186 (CSTTGKRKACKNCSC) is fe-S binding site A. Positions 209, 212, 220, and 223 each coordinate [4Fe-4S] cluster. 2 short sequence motifs (cx2C motif) span residues 209–212 (CGNC) and 220–223 (CSTC). Residues 209–223 (CGNCYLGDAFRCSTC) are fe-S binding site B.

This sequence belongs to the anamorsin family. As to quaternary structure, monomer. [2Fe-2S] cluster is required as a cofactor. [4Fe-4S] cluster serves as cofactor.

It is found in the cytoplasm. The protein localises to the mitochondrion intermembrane space. In terms of biological role, component of the cytosolic iron-sulfur (Fe-S) protein assembly (CIA) machinery. Required for the maturation of extramitochondrial Fe-S proteins. Part of an electron transfer chain functioning in an early step of cytosolic Fe-S biogenesis, facilitating the de novo assembly of a [4Fe-4S] cluster on the cytosolic Fe-S scaffold complex. Electrons are transferred from NADPH via a FAD- and FMN-containing diflavin oxidoreductase. Together with the diflavin oxidoreductase, also required for the assembly of the diferric tyrosyl radical cofactor of ribonucleotide reductase (RNR), probably by providing electrons for reduction during radical cofactor maturation in the catalytic small subunit. The protein is Anamorsin homolog of Drosophila simulans (Fruit fly).